A 272-amino-acid polypeptide reads, in one-letter code: Insulin-like growth factor-binding protein 1 (272 aa).

The signal sequence occupies residues 1-25 (MPEFLTVVSWPFLILLSFQIGVAAG). In terms of domain architecture, IGFBP N-terminal spans 28–109 (QPWHCAPCTA…TRGQGACVPE (82 aa)). 6 disulfides stabilise this stretch: C32–C59, C35–C61, C43–C62, C50–C65, C73–C86, and C80–C106. Residues S139, S157, and S169 each carry the phosphoserine modification. The residue at position 170 (T170) is a Phosphothreonine. The residue at position 171 (Y171) is a Phosphotyrosine. Residues 186-264 (KEPCQRELYK…SLETRGDPNC (79 aa)) enclose the Thyroglobulin type-1 domain. Intrachain disulfides connect C189-C219, C230-C241, and C243-C264. S255 carries the post-translational modification Phosphoserine. Residues 259-261 (RGD) carry the Cell attachment site motif.

As to quaternary structure, binds equally well IGF1 and IGF2. Interacts with integrin ITGA5:ITGB1. Interacts with VHL; this interaction inhibits HIF1A degradation.

It localises to the secreted. Multifunctional protein that plays a critical role in regulating the availability of IGFs such as IGF1 and IGF2 to their receptors and thereby regulates IGF-mediated cellular processes including cell migration, proliferation, differentiation or apoptosis in a cell-type specific manner. Also plays a positive role in cell migration by interacting with integrin ITGA5:ITGB1 through its RGD motif. Mechanistically, binding to integrins leads to activation of focal adhesion kinase/PTK2 and stimulation of the mitogen-activated protein kinase (MAPK) pathway. Regulates cardiomyocyte apoptosis by suppressing HIF-1alpha/HIF1A ubiquitination and subsequent degradation. In Mus musculus (Mouse), this protein is Insulin-like growth factor-binding protein 1 (Igfbp1).